The following is a 511-amino-acid chain: Protein phosphatase 2C 7 (511 aa).

Positions 1-19 are cleaved as a signal peptide; the sequence is MEEISPAVALTLGLANTMC. One can recognise a PPM-type phosphatase domain in the interval 188 to 501; sequence LWGTISICGG…DNISIIVIDL (314 aa). Mn(2+) contacts are provided by Asp242, Gly243, Asp432, and Asp492.

Belongs to the PP2C family. In terms of assembly, interacts with PYL13. It depends on Mg(2+) as a cofactor. Mn(2+) is required as a cofactor. In terms of tissue distribution, expressed in seeds.

The enzyme catalyses O-phospho-L-seryl-[protein] + H2O = L-seryl-[protein] + phosphate. It carries out the reaction O-phospho-L-threonyl-[protein] + H2O = L-threonyl-[protein] + phosphate. In terms of biological role, key component and repressor of the abscisic acid (ABA) signaling pathway that regulates numerous ABA responses, such as stomatal closure, seed germination and inhibition of vegetative growth. This is Protein phosphatase 2C 7 (HAB2) from Arabidopsis thaliana (Mouse-ear cress).